The following is a 185-amino-acid chain: Ribosome-recycling factor (185 aa).

It belongs to the RRF family.

The protein localises to the cytoplasm. Its function is as follows. Responsible for the release of ribosomes from messenger RNA at the termination of protein biosynthesis. May increase the efficiency of translation by recycling ribosomes from one round of translation to another. This Ectopseudomonas mendocina (strain ymp) (Pseudomonas mendocina) protein is Ribosome-recycling factor.